The primary structure comprises 122 residues: Basic phospholipase A2 F15 (122 aa).

Cystine bridges form between Cys-26–Cys-115, Cys-28–Cys-44, Cys-43–Cys-95, Cys-49–Cys-122, Cys-50–Cys-88, Cys-57–Cys-81, and Cys-75–Cys-86. 3 residues coordinate Ca(2+): Tyr-27, Gly-29, and Gly-31. The active site involves His-47. Asp-48 lines the Ca(2+) pocket. The active site involves Asp-89.

Belongs to the phospholipase A2 family. Group II subfamily. D49 sub-subfamily. When this protein is associated with crotapotin (F5 or F7), it forms the crotoxin protein. It depends on Ca(2+) as a cofactor. In terms of tissue distribution, expressed by the venom gland.

Its subcellular location is the secreted. It catalyses the reaction a 1,2-diacyl-sn-glycero-3-phosphocholine + H2O = a 1-acyl-sn-glycero-3-phosphocholine + a fatty acid + H(+). Activated by heparin. Inhibited by its chaperone crotapotin. Functionally, snake venom phospholipase A2 (PLA2) that shows moderate neurotoxic activity in isolated mouse phrenic nerve diaphragm but shows high neurotoxic activity in a chick biventer cervis preparation. Also shows a high bactericidal effect against both Gram-negative and Gram-positive bacteria. PLA2 catalyzes the calcium-dependent hydrolysis of the 2-acyl groups in 3-sn-phosphoglycerides. This is Basic phospholipase A2 F15 from Crotalus durissus terrificus (South American rattlesnake).